A 623-amino-acid chain; its full sequence is Heterogeneous nuclear ribonucleoprotein L (623 aa).

Over residues 1–16 (MSRRLLPRAEKRRRRL) the composition is skewed to basic residues. Residues 1-97 (MSRRLLPRAE…NYDDPHKTPA (97 aa)) are disordered. Residues 17-27 (EQRQQPDEQLR) are compositionally biased toward basic and acidic residues. Low complexity predominate over residues 28–37 (RAGAMVKMAA). Positions 38-54 (AGGGGGGGRYYGGGNEG) are enriched in gly residues. Residues Lys59 and Lys62 each participate in a glycyl lysine isopeptide (Lys-Gly) (interchain with G-Cter in SUMO2) cross-link. The span at 69-87 (QHGGGGGGGSGAAGGGGGE) shows a compositional bias: gly residues. Ser98 carries the phosphoserine modification. Residues 99–173 (PVVHIRGLID…HPAFVNYSTS (75 aa)) enclose the RRM 1 domain. Residue Lys133 forms a Glycyl lysine isopeptide (Lys-Gly) (interchain with G-Cter in SUMO2) linkage. At Ser182 the chain carries Phosphoserine. Positions 190–267 (SVLLFTILNP…CTLKIEYAKP (78 aa)) constitute an RRM 2 domain. Position 266 is an N6-acetyllysine (Lys266). The segment covering 281–298 (DYTNPNLSGQGDPGSNPN) has biased composition (polar residues). The segment at 281–413 (DYTNPNLSGQ…PPPPDYGPHA (133 aa)) is disordered. Ser288 and Ser295 each carry phosphoserine. Residue Lys299 forms a Glycyl lysine isopeptide (Lys-Gly) (interchain with G-Cter in SUMO2) linkage. Asymmetric dimethylarginine is present on residues Arg388 and Arg392. Over residues 398–409 (GHPPPPPPPPDY) the composition is skewed to pro residues. Ser415 is subject to Phosphoserine. RRM domains lie at 416–490 (PVLM…VSKQ) and 498–586 (SYGL…WDSK). Ser578 is subject to Phosphoserine; by CaMK4. Lys602 is covalently cross-linked (Glycyl lysine isopeptide (Lys-Gly) (interchain with G-Cter in SUMO2)).

As to quaternary structure, identified in a IGF2BP1-dependent mRNP granule complex containing untranslated mRNAs. Interacts with HNRNPLL. Interacts with APEX1; the interaction is DNA-dependent. Component of a complex with SETD2. Interacts with ELAVL1. Part of a transcription inhibitory ribonucleoprotein complex composed at least of the circular RNA circZNF827, ZNF827 and HNRNPK. Interacts with CHD8 in an RNA-dependent manner. Several isoelectric forms of the L protein are probably the results of post-translational modifications. In terms of processing, phosphorylation at Ser-578 by CaMK4 enhances interaction with a CaMK4-responsive RNA element (CaRRE1), and prevents inclusion of the stress axis-regulated exon (STREX) of the KCNMA1 potassium channel transcripts upon membrane depolarization.

It localises to the nucleus. Its subcellular location is the nucleoplasm. The protein resides in the cytoplasm. Splicing factor binding to exonic or intronic sites and acting as either an activator or repressor of exon inclusion. Exhibits a binding preference for CA-rich elements. Component of the heterogeneous nuclear ribonucleoprotein (hnRNP) complexes and associated with most nascent transcripts. Associates, together with APEX1, to the negative calcium responsive element (nCaRE) B2 of the APEX2 promoter. As part of a ribonucleoprotein complex composed at least of ZNF827, HNRNPK and the circular RNA circZNF827 that nucleates the complex on chromatin, may negatively regulate the transcription of genes involved in neuronal differentiation. Regulates alternative splicing of a core group of genes involved in neuronal differentiation, likely by mediating H3K36me3-coupled transcription elongation and co-transcriptional RNA processing via interaction with CHD8. This is Heterogeneous nuclear ribonucleoprotein L from Rattus norvegicus (Rat).